Reading from the N-terminus, the 571-residue chain is MSLQPVPHRLLFSDSDDEEDGHSTGEDSAFQESDSPVSRLREKQEGPGGSWEEEEGLGSSPIKSPGHFFMCDSPTYRDLPPASPPGPAASPPDCPGTPPHKTFRKLRLFDTPHTPKSLLSKARGIGSSALRFRGGTLFREAEKLPKPEFTYSTPQVNINPFTPDSLEIQSSTGLCRRRKRALLNDSCGEDMEGSDCELEDEDVRPAKRIPITESNMKSRYATEFHELEKIGSGEFGSVFKCVKRLDGCIYAIKRSKKPMAGSVDEQNALREVYAHAVLGQHPHVVRYYSAWAEDDHMLIQNEYCNGGSLADAISENYRTMQYFTEPELKDLLLQVARGLKYIHSMSLVHMDIKPSNIFISRITVPNTGVEEGDDEDCGSGNVVYKIGDLGHVTRVSSPQVEEGDSRFLANEVLQEDYTHLAKADIFALALTVWCAAGAEPFPTNGDQWHEIRQGKLPRVPQLLSQEFVDLIKLMISPDSEKRPSSMALVKHSVLLSASRKNAEQLRIELNAEKFKNALLQKELKKAQIAKAAAEERALFPDRIATRSTTQSNRTTRLIGKKMNRSVSLTIY.

Residues 1–101 (MSLQPVPHRL…PDCPGTPPHK (101 aa)) are disordered. Residues 81-98 (PASPPGPAASPPDCPGTP) show a composition bias toward pro residues. In terms of domain architecture, Protein kinase spans 224 to 494 (FHELEKIGSG…SMALVKHSVL (271 aa)). Residues 230-238 (IGSGEFGSV) and Lys253 contribute to the ATP site. Asp351 functions as the Proton acceptor in the catalytic mechanism. Mg(2+) contacts are provided by Asn356 and Asp388. Residues 500 to 539 (KNAEQLRIELNAEKFKNALLQKELKKAQIAKAAAEERALF) are a coiled coil.

This sequence belongs to the protein kinase superfamily. Ser/Thr protein kinase family. WEE1 subfamily. In terms of tissue distribution, zygotically expressed. Expressed in regions of the embryo that are devoid of mitotic cells, such as the involuting mesoderm.

It is found in the nucleus. It carries out the reaction L-tyrosyl-[protein] + ATP = O-phospho-L-tyrosyl-[protein] + ADP + H(+). Acts as a zygotic negative regulator of entry into mitosis (G2 to M transition) by protecting the nucleus from cytoplasmically activated cyclin B1-complexed cdk1 before the onset of mitosis by mediating phosphorylation of cdk1 on 'Tyr-15'. Specifically phosphorylates and inactivates cyclin B1-complexed cdk1 reaching a maximum during G2 phase and a minimum as cells enter M phase. Phosphorylation of cyclin B1-cdk1 occurs exclusively on 'Tyr-15' and phosphorylation of monomeric cdk1 does not occur. Involved in convergent extension of the paraxial mesoderm during neurulation by inhibiting the cell cycle. The chain is Wee1-like protein kinase 1-A (wee1-a) from Xenopus laevis (African clawed frog).